The sequence spans 173 residues: dCTP deaminase, dUMP-forming (173 aa).

Residues 93–98 (RSSTGR), D111, 119–121 (TLE), Q138, and Y151 contribute to the dCTP site. E121 (proton donor/acceptor) is an active-site residue.

It belongs to the dCTP deaminase family. Homotrimer.

The catalysed reaction is dCTP + 2 H2O = dUMP + NH4(+) + diphosphate. The protein operates within pyrimidine metabolism; dUMP biosynthesis; dUMP from dCTP: step 1/1. Its function is as follows. Bifunctional enzyme that catalyzes both the deamination of dCTP to dUTP and the hydrolysis of dUTP to dUMP without releasing the toxic dUTP intermediate. The chain is dCTP deaminase, dUMP-forming from Clostridium botulinum (strain Alaska E43 / Type E3).